The sequence spans 438 residues: Protein ROOT INITIATION DEFECTIVE 3 (438 aa).

6 WD repeats span residues 36–74 (AHGL…AEVK), 76–115 (YPVE…LLKK), 118–157 (GHYR…DDFQ), 171–212 (EHTM…LLKN), 214–253 (IFPS…EYGT), and 261–300 (EKGK…HVRT). Residues 394 to 434 (AATEMEMERLKLEYKRSLQMNEQWQKNYENLLQVVMEEEQI) are a coiled coil.

Its function is as follows. Involved in meristem development. Acts as a negative regulator of the CUC-STM pathway in shoot apical meristem (SAM) neo-formation. The sequence is that of Protein ROOT INITIATION DEFECTIVE 3 (RID3) from Arabidopsis thaliana (Mouse-ear cress).